The chain runs to 142 residues: Hemoglobin subunit alpha-C (142 aa).

Alanine 2 is subject to N-acetylalanine. The 141-residue stretch at 2–142 folds into the Globin domain; sequence ALNCDDKAHI…VSGLLTSKYR (141 aa). Histidine 59 provides a ligand contact to O2. A heme b-binding site is contributed by histidine 88.

This sequence belongs to the globin family. Heterotetramer of either two alpha-B chains or two alpha-C chains and two beta chains. The two major hemoglobins, B and C, associate upon deoxygenation to form a trimer of tetramers, BC2, that has a much lower affinity for oxygen than either component alone. Red blood cells.

The alpha-C chain is a component of adult hemoglobin C. The sequence is that of Hemoglobin subunit alpha-C from Aquarana catesbeiana (American bullfrog).